Consider the following 393-residue polypeptide: Acetyl-CoA acetyltransferase (393 aa).

The Acyl-thioester intermediate role is filled by C88. Catalysis depends on proton acceptor residues H349 and C379.

The protein belongs to the thiolase-like superfamily. Thiolase family. As to quaternary structure, homotetramer.

The protein localises to the cytoplasm. The enzyme catalyses 2 acetyl-CoA = acetoacetyl-CoA + CoA. It functions in the pathway biopolymer metabolism; poly-(R)-3-hydroxybutanoate biosynthesis. The condensation reaction is inhibited by free CoA. The cleavage reaction is characterized by substrate inhibition by acetoacetyl-CoA, which is partially relieved by free CoA. Functionally, catalyzes the condensation of two acetyl-coA units to form acetoacetyl-CoA. Is involved in the biosynthesis of polyhydroxybutyrate (PHB), which is accumulated as an intracellular energy reserve material when cells grow under conditions of nutrient limitation. Also catalyzes the reverse reaction, i.e. the cleavage of acetoacetyl-CoA, and is therefore also involved in the reutilization of PHB. The chain is Acetyl-CoA acetyltransferase from Cupriavidus necator (strain ATCC 17699 / DSM 428 / KCTC 22496 / NCIMB 10442 / H16 / Stanier 337) (Ralstonia eutropha).